We begin with the raw amino-acid sequence, 360 residues long: MITHRSNNVQYEVTPPSVEEDLGPQFEFYWTRQKDPHSIRRKLILAKHPEVAKLCGPEWRTKYIASAVVLLQLSIAYALKNTPVLSFKFLALAYVVGATANQNCFLCIHELSHNLAFRKPLHNKLFAIWVNLPIGVPYSASFQPYHQLHHKFLGDEVLDTDLPTPLEATVLSSLLGKAFFATFQIFFYALRPMMVTSIDMTFIHLLNVLVCLVSDFILIKFGSANSLWYLILSSFFAGSLHPTAGHFIAEHYLLDPPKHYTQFQDVPPLETYSYYGMLNLFTWNVGYHNEHHDFPFIAWSKLPLLRTIAHDFYQPLPKHTSWVRVIVDFIFDENVLMYNRVKRETAKDKSVDSKTTKTQS.

3 consecutive transmembrane segments (helical) span residues 67–87, 89–109, and 125–145; these read AVVL…VLSF, FLAL…LCIH, and LFAI…FQPY. Residues 109–113 carry the Histidine box-1 motif; the sequence is HELSH. The Histidine box-2 signature appears at 146–150; that stretch reads HQLHH. A run of 3 helical transmembrane segments spans residues 170-190, 202-222, and 228-248; these read VLSS…FYAL, FIHL…IKFG, and WYLI…GHFI. Residues 288–292 carry the Histidine box-3 motif; the sequence is HNEHH.

The protein belongs to the fatty acid desaturase type 1 family. DEGS subfamily.

The protein resides in the membrane. The catalysed reaction is an N-acylsphinganine + 2 Fe(II)-[cytochrome b5] + O2 + 2 H(+) = an N-acylsphing-4-enine + 2 Fe(III)-[cytochrome b5] + 2 H2O. Its pathway is lipid metabolism; sphingolipid metabolism. Its function is as follows. Delta(4)-fatty-acid desaturase which introduces a double bond at the 4-position in the long-chain base (LCB) of ceramides. Required for the formation of the monounsaturated sphingoid base (E)-sphing-4-enine during glucosylceramide (GluCer) biosynthesis. The sequence is that of Sphingolipid delta(4)-desaturase from Komagataella phaffii (strain GS115 / ATCC 20864) (Yeast).